The chain runs to 92 residues: Putative pterin-4-alpha-carbinolamine dehydratase (92 aa).

It belongs to the pterin-4-alpha-carbinolamine dehydratase family.

It carries out the reaction (4aS,6R)-4a-hydroxy-L-erythro-5,6,7,8-tetrahydrobiopterin = (6R)-L-erythro-6,7-dihydrobiopterin + H2O. The polypeptide is Putative pterin-4-alpha-carbinolamine dehydratase (Cereibacter sphaeroides (strain ATCC 17023 / DSM 158 / JCM 6121 / CCUG 31486 / LMG 2827 / NBRC 12203 / NCIMB 8253 / ATH 2.4.1.) (Rhodobacter sphaeroides)).